The following is a 492-amino-acid chain: Probable cytosol aminopeptidase (492 aa).

The Mn(2+) site is built by Lys-262 and Asp-267. Lys-274 is an active-site residue. Mn(2+)-binding residues include Asp-286, Asp-345, and Glu-347. Arg-349 is an active-site residue.

Belongs to the peptidase M17 family. Mn(2+) serves as cofactor.

It localises to the cytoplasm. The catalysed reaction is Release of an N-terminal amino acid, Xaa-|-Yaa-, in which Xaa is preferably Leu, but may be other amino acids including Pro although not Arg or Lys, and Yaa may be Pro. Amino acid amides and methyl esters are also readily hydrolyzed, but rates on arylamides are exceedingly low.. It carries out the reaction Release of an N-terminal amino acid, preferentially leucine, but not glutamic or aspartic acids.. Presumably involved in the processing and regular turnover of intracellular proteins. Catalyzes the removal of unsubstituted N-terminal amino acids from various peptides. This Acaryochloris marina (strain MBIC 11017) protein is Probable cytosol aminopeptidase.